The sequence spans 396 residues: Capsular polysaccharide biosynthesis protein CapF (396 aa).

The next 12 helical transmembrane spans lie at 7–27, 41–61, 74–94, 101–121, 129–149, 153–173, 198–218, 232–252, 279–299, 315–335, 351–371, and 372–392; these read YMFV…LVIV, ALVI…SVIV, AILS…YVLG, ILIV…YGIY, LLGI…YIIY, HNLN…FAII, IFIL…NTGI, LGIF…ANSI, MVFI…FLGE, IILI…FLGT, LILL…YSLL, and GAAL…YYFY.

The protein belongs to the polysaccharide synthase family.

The protein localises to the cell membrane. Its pathway is capsule biogenesis; capsule polysaccharide biosynthesis. Functionally, required for the biosynthesis of type 1 capsular polysaccharide. This is Capsular polysaccharide biosynthesis protein CapF (capF) from Staphylococcus aureus.